Consider the following 61-residue polypeptide: 14-3-3-like protein (61 aa).

This sequence belongs to the 14-3-3 family.

The sequence is that of 14-3-3-like protein from Zea mays (Maize).